A 587-amino-acid chain; its full sequence is Folylpolyglutamate synthase, mitochondrial (587 aa).

The N-terminal 42 residues, 1-42 (MSRARSHLRAALFLAAASARGITTQVAARRGLSAWPVPQEPS), are a transit peptide targeting the mitochondrion. M43 is modified (N-acetylmethionine). 106-109 (GKGS) is an ATP binding site. Positions 130, 200, and 228 each coordinate Mg(2+). R363 and D377 together coordinate ATP. S539 bears the Phosphoserine mark.

The protein belongs to the folylpolyglutamate synthase family. In terms of assembly, monomer. K(+) serves as cofactor. Requires NH4(+) as cofactor.

The protein localises to the mitochondrion inner membrane. Its subcellular location is the mitochondrion matrix. It localises to the cytoplasm. It catalyses the reaction (6S)-5,6,7,8-tetrahydrofolyl-(gamma-L-Glu)(n) + L-glutamate + ATP = (6S)-5,6,7,8-tetrahydrofolyl-(gamma-L-Glu)(n+1) + ADP + phosphate + H(+). It functions in the pathway cofactor biosynthesis; tetrahydrofolylpolyglutamate biosynthesis. With respect to regulation, activated by 10 mM sodium bicarbonate. Its function is as follows. Catalyzes conversion of folates to polyglutamate derivatives allowing concentration of folate compounds in the cell and the intracellular retention of these cofactors, which are important substrates for most of the folate-dependent enzymes that are involved in one-carbon transfer reactions involved in purine, pyrimidine and amino acid synthesis. Unsubstituted reduced folates are the preferred substrates. Metabolizes methotrexate (MTX) to polyglutamates. The chain is Folylpolyglutamate synthase, mitochondrial (FPGS) from Homo sapiens (Human).